The sequence spans 319 residues: Alpha-hemolysin (319 aa).

The first 26 residues, 1–26, serve as a signal peptide directing secretion; sequence MKTRIVSSVTTTLLLGSILMNPVAGA.

Belongs to the aerolysin family. In terms of assembly, self-assembles to first form a non-lytic oligomeric intermediate, and then, a mushroom-shaped homoheptamer structure of 100 Angstroms in length and up to 100 Angstroms in diameter. Interacts with human ADAM10; this interaction is required for toxin pore formation, disruption of focal adhesions, and hly-mediated cytotoxicity.

It localises to the secreted. Functionally, alpha-toxin binds to the membrane of eukaryotic cells (particularly red blood cells, RBC) forming pores, resulting in hemolysis, with the release of low-molecular weight molecules leading to eventual osmotic RBC lysis. Human RBCs bind much less alpha-toxin than do rabbit RBCs. Heptamer oligomerization and pore formation is required for lytic activity. This chain is Alpha-hemolysin (hly), found in Staphylococcus aureus.